The primary structure comprises 79 residues: Mycoredoxin 1 (79 aa).

The region spanning 1 to 79 (MSNVTIYATD…EVIAKIEALA (79 aa)) is the Glutaredoxin domain.

Belongs to the glutaredoxin family.

The protein resides in the cytoplasm. The catalysed reaction is [mycoredoxin]-L-cysteine + arseno-mycothiol + H(+) = [mycoredoxin]-S-mycothiol-L-cysteine + arsenite. In terms of biological role, involved in defense against toxic arsenate. Involved in the mycothiol/myoredoxin redox pathway which uses a mycothioltransferase mechanism; functions as a monothiol mixed disulfide reductase and is recycled by a second mycothiol forming mycothione which in turn is reduced in a NADPH-dependent manner. The polypeptide is Mycoredoxin 1 (mrx1) (Corynebacterium glutamicum (strain ATCC 13032 / K051)).